The sequence spans 426 residues: Enolase (426 aa).

Residue Gln-162 participates in (2R)-2-phosphoglycerate binding. The Proton donor role is filled by Glu-204. The Mg(2+) site is built by Asp-241, Glu-288, and Asp-315. Residues Lys-340, Arg-369, Ser-370, and Lys-391 each contribute to the (2R)-2-phosphoglycerate site. Residue Lys-340 is the Proton acceptor of the active site.

This sequence belongs to the enolase family. It depends on Mg(2+) as a cofactor.

The protein resides in the cytoplasm. It localises to the secreted. It is found in the cell surface. The enzyme catalyses (2R)-2-phosphoglycerate = phosphoenolpyruvate + H2O. Its pathway is carbohydrate degradation; glycolysis; pyruvate from D-glyceraldehyde 3-phosphate: step 4/5. In terms of biological role, catalyzes the reversible conversion of 2-phosphoglycerate (2-PG) into phosphoenolpyruvate (PEP). It is essential for the degradation of carbohydrates via glycolysis. The polypeptide is Enolase (Bacteroides thetaiotaomicron (strain ATCC 29148 / DSM 2079 / JCM 5827 / CCUG 10774 / NCTC 10582 / VPI-5482 / E50)).